The primary structure comprises 160 residues: MALEGVLKEGFVTTTADQLINWTRNGSLWPMTFGLACCAVEMMHAGASRYDLDRFGVVFRPSPRQSDLMIVAGTLCNKMAPALRKVYDQMPEPRWVISMGSCANGGGYYHNSYSVVRGCDRIVPVDIYVPGCPPTAEALIYGIIQLQSKIARTSTIARKA.

4 residues coordinate [4Fe-4S] cluster: Cys37, Cys38, Cys102, and Cys132.

It belongs to the complex I 20 kDa subunit family. In terms of assembly, NDH-1 is composed of 14 different subunits. Subunits NuoB, C, D, E, F, and G constitute the peripheral sector of the complex. It depends on [4Fe-4S] cluster as a cofactor.

It localises to the cell membrane. The catalysed reaction is a quinone + NADH + 5 H(+)(in) = a quinol + NAD(+) + 4 H(+)(out). NDH-1 shuttles electrons from NADH, via FMN and iron-sulfur (Fe-S) centers, to quinones in the respiratory chain. Couples the redox reaction to proton translocation (for every two electrons transferred, four hydrogen ions are translocated across the cytoplasmic membrane), and thus conserves the redox energy in a proton gradient. The chain is NADH-quinone oxidoreductase subunit B from Polynucleobacter asymbioticus (strain DSM 18221 / CIP 109841 / QLW-P1DMWA-1) (Polynucleobacter necessarius subsp. asymbioticus).